We begin with the raw amino-acid sequence, 1024 residues long: Translation initiation factor IF-2 (1024 aa).

Positions 33–425 are disordered; sequence SHMSSLEDDT…GRVKKTKTMK (393 aa). 4 stretches are compositionally biased toward basic and acidic residues: residues 43–62, 135–148, 167–198, and 223–263; these read EARV…DTRV, TPED…ELKP, TPAK…KETS, and SKPD…KEVR. Positions 316–325 are enriched in polar residues; sequence EATQAPTSPQ. The segment covering 332–350 has biased composition (basic and acidic residues); the sequence is KPADKGPARAQAHRPDTGR. The segment covering 365-375 has biased composition (basic residues); sequence RSKKKEWKKKG. A compositionally biased stretch (basic and acidic residues) spans 394–406; it reads SVVEGKDLYEKGR. The segment covering 407–423 has biased composition (basic residues); sequence SGKKGRRKDGRVKKTKT. The region spanning 518 to 687 is the tr-type G domain; sequence SRPPVVTIMG…LLQSEVLELK (170 aa). Residues 527–534 form a G1 region; it reads GHVDHGKT. Residue 527–534 participates in GTP binding; the sequence is GHVDHGKT. The G2 stretch occupies residues 552 to 556; the sequence is GITQH. Residues 573–576 form a G3 region; the sequence is DTPG. Residues 573-577 and 627-630 each bind GTP; these read DTPGH and NKMD. Residues 627–630 form a G4 region; sequence NKMD. Residues 663–665 are G5; the sequence is SAK.

The protein belongs to the TRAFAC class translation factor GTPase superfamily. Classic translation factor GTPase family. IF-2 subfamily.

The protein localises to the cytoplasm. One of the essential components for the initiation of protein synthesis. Protects formylmethionyl-tRNA from spontaneous hydrolysis and promotes its binding to the 30S ribosomal subunits. Also involved in the hydrolysis of GTP during the formation of the 70S ribosomal complex. The sequence is that of Translation initiation factor IF-2 from Desulforapulum autotrophicum (strain ATCC 43914 / DSM 3382 / VKM B-1955 / HRM2) (Desulfobacterium autotrophicum).